Here is a 112-residue protein sequence, read N- to C-terminus: Colipase (112 aa).

The N-terminal stretch at 1-17 is a signal peptide; the sequence is MKVLVVLLVTLVAVAYA. Positions 18 to 22 are cleaved as a propeptide — enterostatin, activation peptide; it reads APGPR. Intrachain disulfides connect Cys-34–Cys-45, Cys-40–Cys-56, Cys-44–Cys-78, Cys-66–Cys-86, and Cys-80–Cys-104.

Belongs to the colipase family. As to quaternary structure, forms a 1:1 stoichiometric complex with pancreatic lipase. As to expression, expressed by the pancreas.

The protein localises to the secreted. Its function is as follows. Colipase is a cofactor of pancreatic lipase. It allows the lipase to anchor itself to the lipid-water interface. Without colipase the enzyme is washed off by bile salts, which have an inhibitory effect on the lipase. In terms of biological role, enterostatin has a biological activity as a satiety signal. In Rattus norvegicus (Rat), this protein is Colipase.